Here is a 221-residue protein sequence, read N- to C-terminus: Peptide methionine sulfoxide reductase MsrA (221 aa).

Residue cysteine 54 is part of the active site.

It belongs to the MsrA Met sulfoxide reductase family.

The catalysed reaction is L-methionyl-[protein] + [thioredoxin]-disulfide + H2O = L-methionyl-(S)-S-oxide-[protein] + [thioredoxin]-dithiol. It catalyses the reaction [thioredoxin]-disulfide + L-methionine + H2O = L-methionine (S)-S-oxide + [thioredoxin]-dithiol. In terms of biological role, has an important function as a repair enzyme for proteins that have been inactivated by oxidation. Catalyzes the reversible oxidation-reduction of methionine sulfoxide in proteins to methionine. The chain is Peptide methionine sulfoxide reductase MsrA from Methylobacterium sp. (strain 4-46).